The following is a 108-amino-acid chain: Zinc finger protein 475 (108 aa).

C2HC/C3H-type zinc fingers lie at residues 6–35 and 79–108; these read PAVV…KWHN and QLVP…KAAK. The Zn(2+) site is built by cysteine 10, cysteine 13, histidine 25, cysteine 29, cysteine 83, cysteine 86, histidine 98, and cysteine 102.

Requires Zn(2+) as cofactor.

In Homo sapiens (Human), this protein is Zinc finger protein 475.